A 290-amino-acid chain; its full sequence is Flap endonuclease Xni (290 aa).

Asp-125 provides a ligand contact to Mg(2+). The 95-residue stretch at 181-275 (VKTSQLIDFW…DIRLTTSSSA (95 aa)) folds into the 5'-3' exonuclease domain. 3 residues coordinate K(+): Leu-192, Val-203, and Ile-206. Positions 205 to 210 (GIGQVT) are interaction with DNA.

This sequence belongs to the Xni family. Mg(2+) serves as cofactor. K(+) is required as a cofactor.

In terms of biological role, has flap endonuclease activity. During DNA replication, flap endonucleases cleave the 5'-overhanging flap structure that is generated by displacement synthesis when DNA polymerase encounters the 5'-end of a downstream Okazaki fragment. The polypeptide is Flap endonuclease Xni (Colwellia psychrerythraea (strain 34H / ATCC BAA-681) (Vibrio psychroerythus)).